The primary structure comprises 252 residues: 3-deoxy-manno-octulosonate cytidylyltransferase (252 aa).

The protein belongs to the KdsB family.

Its subcellular location is the cytoplasm. It carries out the reaction 3-deoxy-alpha-D-manno-oct-2-ulosonate + CTP = CMP-3-deoxy-beta-D-manno-octulosonate + diphosphate. It participates in nucleotide-sugar biosynthesis; CMP-3-deoxy-D-manno-octulosonate biosynthesis; CMP-3-deoxy-D-manno-octulosonate from 3-deoxy-D-manno-octulosonate and CTP: step 1/1. Its pathway is bacterial outer membrane biogenesis; lipopolysaccharide biosynthesis. Activates KDO (a required 8-carbon sugar) for incorporation into bacterial lipopolysaccharide in Gram-negative bacteria. This chain is 3-deoxy-manno-octulosonate cytidylyltransferase, found in Vibrio cholerae serotype O1 (strain ATCC 39315 / El Tor Inaba N16961).